The sequence spans 339 residues: 1-aminocyclopropane-1-carboxylate deaminase (339 aa).

Lys52 carries the post-translational modification N6-(pyridoxal phosphate)lysine. Ser79 acts as the Nucleophile in catalysis.

Belongs to the ACC deaminase/D-cysteine desulfhydrase family. Homotrimer. Pyridoxal 5'-phosphate is required as a cofactor.

The catalysed reaction is 1-aminocyclopropane-1-carboxylate + H2O = 2-oxobutanoate + NH4(+). Functionally, catalyzes a cyclopropane ring-opening reaction, the irreversible conversion of 1-aminocyclopropane-1-carboxylate (ACC) to ammonia and alpha-ketobutyrate. Allows growth on ACC as a nitrogen source. The chain is 1-aminocyclopropane-1-carboxylate deaminase from Bradyrhizobium sp. (strain ORS 278).